Reading from the N-terminus, the 699-residue chain is Cysteine--tRNA ligase (699 aa).

The interval 1–226 is unknown; the sequence is MTTITEKRLT…SEQQRLIHNP (226 aa). Zn(2+) is bound at residue C254. Positions 256–266 match the 'HIGH' region motif; sequence MTVYDYCHLGH. Positions 435, 460, and 464 each coordinate Zn(2+). A 'KMSKS' region motif is present at residues 508-512; sequence KMSKS. K511 contacts ATP.

It belongs to the class-I aminoacyl-tRNA synthetase family. Monomer. Zn(2+) is required as a cofactor.

Its subcellular location is the cytoplasm. The catalysed reaction is tRNA(Cys) + L-cysteine + ATP = L-cysteinyl-tRNA(Cys) + AMP + diphosphate. The protein is Cysteine--tRNA ligase (cysS) of Neisseria meningitidis serogroup A / serotype 4A (strain DSM 15465 / Z2491).